The sequence spans 1097 residues: DNA-directed RNA polymerase subunit beta (1097 aa).

The disordered stretch occupies residues 1070–1097 (LMQDVNPRRNTPSRPTYESLGTSEYEED). The segment covering 1077 to 1091 (RRNTPSRPTYESLGT) has biased composition (polar residues).

This sequence belongs to the RNA polymerase beta chain family. In terms of assembly, in cyanobacteria the RNAP catalytic core is composed of 2 alpha, 1 beta, 1 beta', 1 gamma and 1 omega subunit. When a sigma factor is associated with the core the holoenzyme is formed, which can initiate transcription.

The enzyme catalyses RNA(n) + a ribonucleoside 5'-triphosphate = RNA(n+1) + diphosphate. Functionally, DNA-dependent RNA polymerase catalyzes the transcription of DNA into RNA using the four ribonucleoside triphosphates as substrates. This is DNA-directed RNA polymerase subunit beta from Prochlorococcus marinus (strain MIT 9515).